The primary structure comprises 87 residues: Exodeoxyribonuclease 7 small subunit (87 aa).

Belongs to the XseB family. As to quaternary structure, heterooligomer composed of large and small subunits.

Its subcellular location is the cytoplasm. The enzyme catalyses Exonucleolytic cleavage in either 5'- to 3'- or 3'- to 5'-direction to yield nucleoside 5'-phosphates.. Its function is as follows. Bidirectionally degrades single-stranded DNA into large acid-insoluble oligonucleotides, which are then degraded further into small acid-soluble oligonucleotides. The polypeptide is Exodeoxyribonuclease 7 small subunit (Halorhodospira halophila (strain DSM 244 / SL1) (Ectothiorhodospira halophila (strain DSM 244 / SL1))).